We begin with the raw amino-acid sequence, 185 residues long: Ribosome-recycling factor (185 aa).

The segment covering 138–179 (TLKRQEKNGDITEDEQRSLEKQVQKVTDDATKEIDKLADQKS) has biased composition (basic and acidic residues). The disordered stretch occupies residues 138 to 185 (TLKRQEKNGDITEDEQRSLEKQVQKVTDDATKEIDKLADQKSQEITQG).

This sequence belongs to the RRF family.

The protein resides in the cytoplasm. Its function is as follows. Responsible for the release of ribosomes from messenger RNA at the termination of protein biosynthesis. May increase the efficiency of translation by recycling ribosomes from one round of translation to another. The protein is Ribosome-recycling factor of Lactobacillus gasseri (strain ATCC 33323 / DSM 20243 / BCRC 14619 / CIP 102991 / JCM 1131 / KCTC 3163 / NCIMB 11718 / NCTC 13722 / AM63).